Reading from the N-terminus, the 875-residue chain is Translation initiation factor IF-2 (875 aa).

3 disordered regions span residues 1–20, 47–102, and 126–246; these read MSDSDKKPTLGRRPLGLKTA, LMGR…LREA, and EEER…DRRG. Positions 54–66 are enriched in low complexity; sequence AAPTAAPAAAATP. Positions 67–85 are enriched in pro residues; that stretch reads APTPVAPPPPPPPPPPPPS. Basic and acidic residues-rich tracts occupy residues 88-102 and 126-140; these read RETRQEMQVRLLREA and EEERRRAEEKARAEA. Low complexity-rich tracts occupy residues 141 to 195 and 202 to 221; these read EAAA…PAAP and PAAPAVPAPRRFTPVAPAAP. The segment covering 223-246 has biased composition (basic and acidic residues); sequence KRPELAAKKPAHPQRDRKTEDRRG. A tr-type G domain is found at 374 to 544; sequence ARPPVVTIMG…LLQAELLELK (171 aa). A G1 region spans residues 383 to 390; that stretch reads GHVDHGKT. GTP is bound at residue 383–390; it reads GHVDHGKT. Residues 408–412 are G2; sequence GITQH. Residues 430–433 are G3; the sequence is DTPG. GTP-binding positions include 430-434 and 484-487; these read DTPGH and TKAD. The G4 stretch occupies residues 484–487; sequence TKAD. Positions 520–522 are G5; the sequence is SAK.

The protein belongs to the TRAFAC class translation factor GTPase superfamily. Classic translation factor GTPase family. IF-2 subfamily.

It localises to the cytoplasm. Its function is as follows. One of the essential components for the initiation of protein synthesis. Protects formylmethionyl-tRNA from spontaneous hydrolysis and promotes its binding to the 30S ribosomal subunits. Also involved in the hydrolysis of GTP during the formation of the 70S ribosomal complex. The chain is Translation initiation factor IF-2 from Novosphingobium aromaticivorans (strain ATCC 700278 / DSM 12444 / CCUG 56034 / CIP 105152 / NBRC 16084 / F199).